Here is a 452-residue protein sequence, read N- to C-terminus: Methionine aminopeptidase 2-1 (452 aa).

The tract at residues 1 to 100 (MAAKVADDVA…VRIDEVFPND (100 aa)) is disordered. Positions 37-51 (EHDDSDDDNEAEDGA) are enriched in acidic residues. Residues 60–73 (KKKKKRKPRKKKKA) are compositionally biased toward basic residues. Residue His-205 participates in substrate binding. Residues Asp-225, Asp-236, and His-305 each coordinate a divalent metal cation. Residue His-313 participates in substrate binding. Residues Glu-338 and Glu-433 each contribute to the a divalent metal cation site.

Belongs to the peptidase M24A family. Methionine aminopeptidase eukaryotic type 2 subfamily. Co(2+) is required as a cofactor. Requires Zn(2+) as cofactor. The cofactor is Mn(2+). Fe(2+) serves as cofactor.

The protein resides in the cytoplasm. The enzyme catalyses Release of N-terminal amino acids, preferentially methionine, from peptides and arylamides.. In terms of biological role, cotranslationally removes the N-terminal methionine from nascent proteins. The N-terminal methionine is often cleaved when the second residue in the primary sequence is small and uncharged (Met-Ala-, Cys, Gly, Pro, Ser, Thr, or Val). This chain is Methionine aminopeptidase 2-1, found in Pyrenophora teres f. teres (strain 0-1) (Barley net blotch fungus).